Here is a 351-residue protein sequence, read N- to C-terminus: Ribosomal RNA small subunit methyltransferase H (351 aa).

Residues 48–50, Asp-67, Phe-94, Asp-115, and Gln-122 each bind S-adenosyl-L-methionine; that span reads GGY. The tract at residues 298-351 is disordered; sequence GPVLPSEAETEVNPRARSAKLRAGERTDGPAPPPLSAIETLASLPAPQGRGTRR.

It belongs to the methyltransferase superfamily. RsmH family.

Its subcellular location is the cytoplasm. It carries out the reaction cytidine(1402) in 16S rRNA + S-adenosyl-L-methionine = N(4)-methylcytidine(1402) in 16S rRNA + S-adenosyl-L-homocysteine + H(+). Its function is as follows. Specifically methylates the N4 position of cytidine in position 1402 (C1402) of 16S rRNA. This Methylorubrum populi (strain ATCC BAA-705 / NCIMB 13946 / BJ001) (Methylobacterium populi) protein is Ribosomal RNA small subunit methyltransferase H.